The sequence spans 279 residues: Tryptophan 2,3-dioxygenase (279 aa).

Residues 48 to 52 (FIVIH), tyrosine 110, and arginine 114 contribute to the substrate site. Histidine 237 lines the heme pocket. Threonine 251 is a binding site for substrate.

The protein belongs to the tryptophan 2,3-dioxygenase family. Homotetramer. Heme is required as a cofactor.

The catalysed reaction is L-tryptophan + O2 = N-formyl-L-kynurenine. It participates in amino-acid degradation; L-tryptophan degradation via kynurenine pathway; L-kynurenine from L-tryptophan: step 1/2. Heme-dependent dioxygenase that catalyzes the oxidative cleavage of the L-tryptophan (L-Trp) pyrrole ring and converts L-tryptophan to N-formyl-L-kynurenine. Catalyzes the oxidative cleavage of the indole moiety. In Bacillus thuringiensis (strain Al Hakam), this protein is Tryptophan 2,3-dioxygenase.